The sequence spans 733 residues: Photosystem I P700 chlorophyll a apoprotein A2 (733 aa).

The next 8 helical transmembrane spans lie at I46–A69, L134–Q157, L174–L198, I272–Y290, L329–Y352, A368–V394, A416–H438, and F516–V534. Residues C558 and C567 each coordinate [4Fe-4S] cluster. 2 helical membrane passes run A574 to W595 and L642 to I664. Residues H653, M661, and Y669 each coordinate chlorophyll a. W670 contributes to the phylloquinone binding site. The chain crosses the membrane as a helical span at residues L706–A726.

The protein belongs to the PsaA/PsaB family. In terms of assembly, the PsaA/B heterodimer binds the P700 chlorophyll special pair and subsequent electron acceptors. PSI consists of a core antenna complex that captures photons, and an electron transfer chain that converts photonic excitation into a charge separation. The eukaryotic PSI reaction center is composed of at least 11 subunits. Requires P700 is a chlorophyll a/chlorophyll a' dimer, A0 is one or more chlorophyll a, A1 is one or both phylloquinones and FX is a shared 4Fe-4S iron-sulfur center. as cofactor.

It localises to the plastid. The protein localises to the chloroplast thylakoid membrane. It carries out the reaction reduced [plastocyanin] + hnu + oxidized [2Fe-2S]-[ferredoxin] = oxidized [plastocyanin] + reduced [2Fe-2S]-[ferredoxin]. PsaA and PsaB bind P700, the primary electron donor of photosystem I (PSI), as well as the electron acceptors A0, A1 and FX. PSI is a plastocyanin/cytochrome c6-ferredoxin oxidoreductase, converting photonic excitation into a charge separation, which transfers an electron from the donor P700 chlorophyll pair to the spectroscopically characterized acceptors A0, A1, FX, FA and FB in turn. Oxidized P700 is reduced on the lumenal side of the thylakoid membrane by plastocyanin or cytochrome c6. The chain is Photosystem I P700 chlorophyll a apoprotein A2 from Trieres chinensis (Marine centric diatom).